Consider the following 507-residue polypeptide: ATP synthase subunit alpha, chloroplastic (507 aa).

170 to 177 (GDRQTGKT) is a binding site for ATP. Position 257 is a phosphothreonine (Thr-257).

This sequence belongs to the ATPase alpha/beta chains family. F-type ATPases have 2 components, CF(1) - the catalytic core - and CF(0) - the membrane proton channel. CF(1) has five subunits: alpha(3), beta(3), gamma(1), delta(1), epsilon(1). CF(0) has four main subunits: a, b, b' and c.

It localises to the plastid. Its subcellular location is the chloroplast thylakoid membrane. It carries out the reaction ATP + H2O + 4 H(+)(in) = ADP + phosphate + 5 H(+)(out). Functionally, produces ATP from ADP in the presence of a proton gradient across the membrane. The alpha chain is a regulatory subunit. This is ATP synthase subunit alpha, chloroplastic from Lepidium virginicum (Virginia pepperweed).